The chain runs to 593 residues: NADH-quinone oxidoreductase subunit C/D (593 aa).

The segment at 1-184 (MTADNALYIP…DPYSLTLAKQ (184 aa)) is NADH dehydrogenase I subunit C. The tract at residues 208–593 (DYMFLNLGPN…IDFVMADVDR (386 aa)) is NADH dehydrogenase I subunit D.

This sequence in the N-terminal section; belongs to the complex I 30 kDa subunit family. It in the C-terminal section; belongs to the complex I 49 kDa subunit family. As to quaternary structure, NDH-1 is composed of 13 different subunits. Subunits NuoB, CD, E, F, and G constitute the peripheral sector of the complex.

Its subcellular location is the cell inner membrane. It catalyses the reaction a quinone + NADH + 5 H(+)(in) = a quinol + NAD(+) + 4 H(+)(out). NDH-1 shuttles electrons from NADH, via FMN and iron-sulfur (Fe-S) centers, to quinones in the respiratory chain. The immediate electron acceptor for the enzyme in this species is believed to be ubiquinone. Couples the redox reaction to proton translocation (for every two electrons transferred, four hydrogen ions are translocated across the cytoplasmic membrane), and thus conserves the redox energy in a proton gradient. This is NADH-quinone oxidoreductase subunit C/D from Pseudomonas syringae pv. tomato (strain ATCC BAA-871 / DC3000).